A 493-amino-acid chain; its full sequence is Glutamyl-tRNA(Gln) amidotransferase subunit A (493 aa).

Catalysis depends on charge relay system residues lysine 78 and serine 158. Serine 182 (acyl-ester intermediate) is an active-site residue.

It belongs to the amidase family. GatA subfamily. Heterotrimer of A, B and C subunits.

It catalyses the reaction L-glutamyl-tRNA(Gln) + L-glutamine + ATP + H2O = L-glutaminyl-tRNA(Gln) + L-glutamate + ADP + phosphate + H(+). In terms of biological role, allows the formation of correctly charged Gln-tRNA(Gln) through the transamidation of misacylated Glu-tRNA(Gln) in organisms which lack glutaminyl-tRNA synthetase. The reaction takes place in the presence of glutamine and ATP through an activated gamma-phospho-Glu-tRNA(Gln). In Rickettsia conorii (strain ATCC VR-613 / Malish 7), this protein is Glutamyl-tRNA(Gln) amidotransferase subunit A.